The following is a 93-amino-acid chain: Large ribosomal subunit protein bL27 (93 aa).

A propeptide spanning residues 1–9 is cleaved from the precursor; it reads MLQLNLQFF. The tract at residues 14–33 is disordered; the sequence is GVGSTKNGRDSISKRLGAKR.

Belongs to the bacterial ribosomal protein bL27 family. Post-translationally, the N-terminus is cleaved by ribosomal processing cysteine protease Prp.

This is Large ribosomal subunit protein bL27 from Exiguobacterium sp. (strain ATCC BAA-1283 / AT1b).